Consider the following 150-residue polypeptide: Arginine repressor (150 aa).

Belongs to the ArgR family.

Its subcellular location is the cytoplasm. Its pathway is amino-acid biosynthesis; L-arginine biosynthesis [regulation]. In terms of biological role, regulates arginine biosynthesis genes. This is Arginine repressor from Clostridium botulinum (strain Okra / Type B1).